The following is a 264-amino-acid chain: Thiazole synthase (264 aa).

The active-site Schiff-base intermediate with DXP is the Lys106. 1-deoxy-D-xylulose 5-phosphate is bound by residues Gly167, Ala193–Gly194, and Asn215–Thr216.

The protein belongs to the ThiG family. As to quaternary structure, homotetramer. Forms heterodimers with either ThiH or ThiS.

Its subcellular location is the cytoplasm. It catalyses the reaction [ThiS sulfur-carrier protein]-C-terminal-Gly-aminoethanethioate + 2-iminoacetate + 1-deoxy-D-xylulose 5-phosphate = [ThiS sulfur-carrier protein]-C-terminal Gly-Gly + 2-[(2R,5Z)-2-carboxy-4-methylthiazol-5(2H)-ylidene]ethyl phosphate + 2 H2O + H(+). The protein operates within cofactor biosynthesis; thiamine diphosphate biosynthesis. In terms of biological role, catalyzes the rearrangement of 1-deoxy-D-xylulose 5-phosphate (DXP) to produce the thiazole phosphate moiety of thiamine. Sulfur is provided by the thiocarboxylate moiety of the carrier protein ThiS. In vitro, sulfur can be provided by H(2)S. The chain is Thiazole synthase from Xanthomonas oryzae pv. oryzae (strain MAFF 311018).